A 129-amino-acid chain; its full sequence is Small ribosomal subunit protein uS8my (129 aa).

The protein belongs to the universal ribosomal protein uS8 family. As to quaternary structure, component of the mitochondrial ribosome small subunit.

Its subcellular location is the mitochondrion. In Arabidopsis thaliana (Mouse-ear cress), this protein is Small ribosomal subunit protein uS8my (RPS15AE).